The sequence spans 478 residues: Glycogen synthase (478 aa).

ADP-alpha-D-glucose is bound at residue Lys-16.

This sequence belongs to the glycosyltransferase 1 family. Bacterial/plant glycogen synthase subfamily.

The catalysed reaction is [(1-&gt;4)-alpha-D-glucosyl](n) + ADP-alpha-D-glucose = [(1-&gt;4)-alpha-D-glucosyl](n+1) + ADP + H(+). It participates in glycan biosynthesis; glycogen biosynthesis. Synthesizes alpha-1,4-glucan chains using ADP-glucose. The polypeptide is Glycogen synthase (Lachnospira eligens (strain ATCC 27750 / DSM 3376 / VPI C15-48 / C15-B4) (Eubacterium eligens)).